A 138-amino-acid chain; its full sequence is Thyrotropin subunit beta (138 aa).

The first 20 residues, 1 to 20 (MTATFLMSLLFGLAFGQTMS), serve as a signal peptide directing secretion. 6 disulfide bridges follow: Cys22-Cys72, Cys36-Cys87, Cys39-Cys125, Cys47-Cys103, Cys51-Cys105, and Cys108-Cys115. A glycan (N-linked (GlcNAc...) asparagine) is linked at Asn43. A propeptide spanning residues 133–138 (LVGFPV) is cleaved from the precursor.

The protein belongs to the glycoprotein hormones subunit beta family. Heterodimer of a common alpha chain and a unique beta chain which confers biological specificity to thyrotropin, lutropin, follitropin and gonadotropin.

The protein resides in the secreted. Indispensable for the control of thyroid structure and metabolism. The polypeptide is Thyrotropin subunit beta (TSHB) (Monodelphis domestica (Gray short-tailed opossum)).